The primary structure comprises 136 residues: MTIQKTGCRGREAAEVVEQRRRSHHCDDRKQTLLALLILVLYLGMGISGSSWEVSGQTKDCNHFQNPVTPQGFEYQTKEPAEEPLRTLRKWLKINLHGFLEKLEKEVRELEQLVRDLEFWLDALLGDLRPEDPCFT.

The Cytoplasmic segment spans residues 1-31 (MTIQKTGCRGREAAEVVEQRRRSHHCDDRKQ). The chain crosses the membrane as a helical; Signal-anchor for type II membrane protein span at residues 32–52 (TLLALLILVLYLGMGISGSSW). The Extracellular portion of the chain corresponds to 53–136 (EVSGQTKDCN…DLRPEDPCFT (84 aa)). The stretch at 92–124 (LKINLHGFLEKLEKEVRELEQLVRDLEFWLDAL) forms a coiled coil.

It is found in the membrane. This is Small integral membrane protein 23 (Smim23) from Mus musculus (Mouse).